A 618-amino-acid chain; its full sequence is UvrABC system protein C (618 aa).

The GIY-YIG domain maps to 13 to 92; that stretch reads DKPGVYLMKN…IKKYRPKYNI (80 aa). The 36-residue stretch at 204-239 folds into the UVR domain; the sequence is LDIVENFKLNMEKAAENLEFEKAAMLRDKINIIEKI.

The protein belongs to the UvrC family. As to quaternary structure, interacts with UvrB in an incision complex.

It localises to the cytoplasm. The UvrABC repair system catalyzes the recognition and processing of DNA lesions. UvrC both incises the 5' and 3' sides of the lesion. The N-terminal half is responsible for the 3' incision and the C-terminal half is responsible for the 5' incision. The polypeptide is UvrABC system protein C (Clostridium botulinum (strain Loch Maree / Type A3)).